The following is a 172-amino-acid chain: 3-hydroxydecanoyl-[acyl-carrier-protein] dehydratase (172 aa).

The active site involves H71.

The protein belongs to the thioester dehydratase family. FabA subfamily. As to quaternary structure, homodimer.

The protein localises to the cytoplasm. The catalysed reaction is a (3R)-hydroxyacyl-[ACP] = a (2E)-enoyl-[ACP] + H2O. The enzyme catalyses (3R)-hydroxydecanoyl-[ACP] = (2E)-decenoyl-[ACP] + H2O. It catalyses the reaction (2E)-decenoyl-[ACP] = (3Z)-decenoyl-[ACP]. Its pathway is lipid metabolism; fatty acid biosynthesis. Necessary for the introduction of cis unsaturation into fatty acids. Catalyzes the dehydration of (3R)-3-hydroxydecanoyl-ACP to E-(2)-decenoyl-ACP and then its isomerization to Z-(3)-decenoyl-ACP. Can catalyze the dehydratase reaction for beta-hydroxyacyl-ACPs with saturated chain lengths up to 16:0, being most active on intermediate chain length. The chain is 3-hydroxydecanoyl-[acyl-carrier-protein] dehydratase from Klebsiella pneumoniae subsp. pneumoniae (strain ATCC 700721 / MGH 78578).